The primary structure comprises 269 residues: 4-hydroxy-tetrahydrodipicolinate reductase (269 aa).

11–16 (GPIGRM) contributes to the NAD(+) binding site. Residue lysine 39 coordinates NADP(+). Residues 101 to 103 (GTT) and 125 to 128 (ASNF) each bind NAD(+). Histidine 158 functions as the Proton donor/acceptor in the catalytic mechanism. Position 159 (histidine 159) interacts with (S)-2,3,4,5-tetrahydrodipicolinate. Lysine 162 serves as the catalytic Proton donor. Residue 168 to 169 (GT) coordinates (S)-2,3,4,5-tetrahydrodipicolinate.

The protein belongs to the DapB family. In terms of assembly, homotetramer.

It localises to the cytoplasm. The catalysed reaction is (S)-2,3,4,5-tetrahydrodipicolinate + NAD(+) + H2O = (2S,4S)-4-hydroxy-2,3,4,5-tetrahydrodipicolinate + NADH + H(+). It catalyses the reaction (S)-2,3,4,5-tetrahydrodipicolinate + NADP(+) + H2O = (2S,4S)-4-hydroxy-2,3,4,5-tetrahydrodipicolinate + NADPH + H(+). Its pathway is amino-acid biosynthesis; L-lysine biosynthesis via DAP pathway; (S)-tetrahydrodipicolinate from L-aspartate: step 4/4. Its function is as follows. Catalyzes the conversion of 4-hydroxy-tetrahydrodipicolinate (HTPA) to tetrahydrodipicolinate. This Buchnera aphidicola subsp. Acyrthosiphon pisum (strain 5A) protein is 4-hydroxy-tetrahydrodipicolinate reductase.